Consider the following 447-residue polypeptide: Probable 3-deoxy-D-manno-octulosonic acid transferase, mitochondrial (447 aa).

A mitochondrion-targeting transit peptide spans 1–32 (MKLGVFVYRLYRALTYGVSPLIHLHIRWRRLR). The active-site Proton acceptor is the glutamate 66. CMP-binding positions include 278–279 (PR), 320–322 (LGE), and 347–350 (NLSE).

Belongs to the glycosyltransferase group 1 family. Glycosyltransferase 30 subfamily. In terms of tissue distribution, expressed in leaves, stems and flowers.

It localises to the mitochondrion. The enzyme catalyses lipid IVA (E. coli) + CMP-3-deoxy-beta-D-manno-octulosonate = alpha-Kdo-(2-&gt;6)-lipid IVA (E. coli) + CMP + H(+). It catalyses the reaction alpha-Kdo-(2-&gt;6)-lipid IVA (E. coli) + CMP-3-deoxy-beta-D-manno-octulosonate = alpha-Kdo-(2-&gt;4)-alpha-Kdo-(2-&gt;6)-lipid IVA (E. coli) + CMP + H(+). The protein operates within glycolipid biosynthesis; KDO(2)-lipid A biosynthesis; KDO(2)-lipid A from CMP-3-deoxy-D-manno-octulosonate and lipid IV(A): step 1/4. It functions in the pathway glycolipid biosynthesis; KDO(2)-lipid A biosynthesis; KDO(2)-lipid A from CMP-3-deoxy-D-manno-octulosonate and lipid IV(A): step 2/4. Its function is as follows. Involved in the biosynthesis of lipid A, a phosphorylated glycolipid that in bacteria anchors the lipopolysaccharide to the outer membrane of the cell. Catalyzes the transfer of two 3-deoxy-D-manno-octulosonate (Kdo) residues from CMP-Kdo to lipid IV(A), the tetraacyldisaccharide-1,4'-bisphosphate precursor of lipid A. Lipid A-like molecules in plants may serve as structural components of the outer membranes of mitochondria and/or chloroplasts, or may be involved in signal transduction or plant defense responses. In Arabidopsis thaliana (Mouse-ear cress), this protein is Probable 3-deoxy-D-manno-octulosonic acid transferase, mitochondrial (KDTA).